Consider the following 234-residue polypeptide: Phosphoribosylaminoimidazole-succinocarboxamide synthase (234 aa).

Belongs to the SAICAR synthetase family.

It carries out the reaction 5-amino-1-(5-phospho-D-ribosyl)imidazole-4-carboxylate + L-aspartate + ATP = (2S)-2-[5-amino-1-(5-phospho-beta-D-ribosyl)imidazole-4-carboxamido]succinate + ADP + phosphate + 2 H(+). It participates in purine metabolism; IMP biosynthesis via de novo pathway; 5-amino-1-(5-phospho-D-ribosyl)imidazole-4-carboxamide from 5-amino-1-(5-phospho-D-ribosyl)imidazole-4-carboxylate: step 1/2. In Streptococcus pyogenes serotype M1, this protein is Phosphoribosylaminoimidazole-succinocarboxamide synthase.